Consider the following 280-residue polypeptide: Phosphatidylglycerol--prolipoprotein diacylglyceryl transferase (280 aa).

The next 3 membrane-spanning stretches (helical) occupy residues 19 to 39, 56 to 76, and 90 to 110; these read LSVRWYGIIIAVGILLGYFVA, IIFYSALFGFIAARIYFVIFQ, and IWHGGIAIHGGLIGGFIAGVI. An a 1,2-diacyl-sn-glycero-3-phospho-(1'-sn-glycerol)-binding site is contributed by Arg138. The next 2 helical transmembrane spans lie at 204 to 224 and 236 to 256; these read LGETFFLYLTWYSIGRFFIEG and IRVAQLVSILLILISISLIVY.

Belongs to the Lgt family.

It is found in the cell membrane. The catalysed reaction is L-cysteinyl-[prolipoprotein] + a 1,2-diacyl-sn-glycero-3-phospho-(1'-sn-glycerol) = an S-1,2-diacyl-sn-glyceryl-L-cysteinyl-[prolipoprotein] + sn-glycerol 1-phosphate + H(+). It functions in the pathway protein modification; lipoprotein biosynthesis (diacylglyceryl transfer). In terms of biological role, catalyzes the transfer of the diacylglyceryl group from phosphatidylglycerol to the sulfhydryl group of the N-terminal cysteine of a prolipoprotein, the first step in the formation of mature lipoproteins. The polypeptide is Phosphatidylglycerol--prolipoprotein diacylglyceryl transferase (Staphylococcus aureus (strain MRSA252)).